The primary structure comprises 296 residues: MEETPPPMQAGSKPHLEKLTLGVTRILESSPGVTEVSIIEKLPAERHMISSWEQKNNCVMPEDVRNFYLMTNGFHMTWSVKLDDHIIPLGSMVINGISKLTQLIQSSVYSLPNAPTLADLEDDSQEGNEDHQLEKPHFDCRSAIFELDSCGGNGKVCLVYKNGKPGLAHDTEIWFLDRALYWHFLTDTFTAYYRLLITHLGLPQWQYAFTSYGISPQAKQWFSMYKPITYNTSLLTEEPDTFVNKLDPSKVFKSKNKILIPKKKGPVQPVSGQKGPGPLAPPTSKPSAGCGNPVRK.

The disordered stretch occupies residues Lys257–Lys296.

In terms of assembly, part of the neuronal tubulin polyglutamylase complex which contains TPGS1, TPGS2, TTLL1, LRRC49 and NICN1. Interacts with CSTPP1 and LRRC49.

The protein resides in the cytoplasm. It is found in the cytoskeleton. Its subcellular location is the microtubule organizing center. It localises to the centrosome. The protein localises to the centriolar satellite. In terms of biological role, subunit of the tubulin polyglutamylase complex (TPGC). The complex mediates cilia and flagella polyglutamylation which is essential for their biogenesis and motility. The sequence is that of Tubulin polyglutamylase complex subunit 2 (Tpgs2) from Rattus norvegicus (Rat).